The chain runs to 348 residues: Flavonol synthase/flavanone 3-hydroxylase (348 aa).

Residues 209–309 (EIVYLLKINY…RMSWPVFLEP (101 aa)) form the Fe2OG dioxygenase domain. 3 residues coordinate Fe cation: His-234, Asp-236, and His-290.

The protein belongs to the iron/ascorbate-dependent oxidoreductase family. Requires L-ascorbate as cofactor. The cofactor is Fe cation.

The protein localises to the cytoplasm. The catalysed reaction is a (2R,3R)-dihydroflavonol + 2-oxoglutarate + O2 = a flavonol + succinate + CO2 + H2O. The enzyme catalyses a (2S)-flavan-4-one + 2-oxoglutarate + O2 = a (2R,3R)-dihydroflavonol + succinate + CO2. It participates in secondary metabolite biosynthesis; flavonoid biosynthesis. Its function is as follows. Catalyzes the formation of flavonols from dihydroflavonols. It can act on dihydrokaempferol to produce kaempferol, on dihydroquercetin to produce quercitin and on dihydromyricetin to produce myricetin. This is Flavonol synthase/flavanone 3-hydroxylase (FL) from Petunia hybrida (Petunia).